A 299-amino-acid polypeptide reads, in one-letter code: MRMRPTLSWTPGADLPPGTTDLAPVADALRAGGVLVLSGAGISTESGIPDYRGEGGSLSRHTPMTYQDFTAHPEARRRYWARSHLGWRTFGRARPNAGHRSVAAFGRHGLLTGVITQNVDGLHQAAGSEGVVELHGSLDRVVCLSCGVLSPRRELARRLEEANAGFSPVAAGINPDGDADLTDEQVGDFRVVPCAVCGGVLKPDVVFFGENVPPRRVEHCRELVRGASSLLVLGSSLTVMSGLRFVRQAAEAGKPVLIVNRDATRGDRLAVTRVALPLGPALTTVADRLGLRVGDAATA.

Residues 15-292 (LPPGTTDLAP…TTVADRLGLR (278 aa)) enclose the Deacetylase sirtuin-type domain. Residues 39–59 (GAGISTESGIPDYRGEGGSLS) and 117–120 (QNVD) contribute to the NAD(+) site. Histidine 135 acts as the Proton acceptor in catalysis. Residues cysteine 143, cysteine 146, cysteine 194, and cysteine 197 each coordinate Zn(2+). NAD(+)-binding positions include 234-236 (GSS) and leucine 278.

This sequence belongs to the sirtuin family. Class II subfamily. Zn(2+) serves as cofactor.

Its subcellular location is the cytoplasm. It carries out the reaction N(6)-acetyl-L-lysyl-[protein] + NAD(+) + H2O = 2''-O-acetyl-ADP-D-ribose + nicotinamide + L-lysyl-[protein]. NAD-dependent protein deacetylase which modulates the activities of several enzymes which are inactive in their acetylated form. In Streptomyces coelicolor (strain ATCC BAA-471 / A3(2) / M145), this protein is NAD-dependent protein deacetylase 1.